A 79-amino-acid polypeptide reads, in one-letter code: Translational regulator CsrA (79 aa).

This sequence belongs to the CsrA/RsmA family. Homodimer; the beta-strands of each monomer intercalate to form a hydrophobic core, while the alpha-helices form wings that extend away from the core.

It is found in the cytoplasm. In terms of biological role, a translational regulator that binds mRNA to regulate translation initiation and/or mRNA stability. Usually binds in the 5'-UTR at or near the Shine-Dalgarno sequence preventing ribosome-binding, thus repressing translation. Its main target seems to be the major flagellin gene, while its function is anatagonized by FliW. In Solidesulfovibrio magneticus (strain ATCC 700980 / DSM 13731 / RS-1) (Desulfovibrio magneticus), this protein is Translational regulator CsrA.